Reading from the N-terminus, the 488-residue chain is Ribulose bisphosphate carboxylase large chain 1 (488 aa).

The substrate site is built by asparagine 128 and threonine 178. Lysine 180 serves as the catalytic Proton acceptor. Lysine 182 lines the substrate pocket. The Mg(2+) site is built by lysine 206, aspartate 208, and glutamate 209. At lysine 206 the chain carries N6-carboxylysine. Histidine 298 (proton acceptor) is an active-site residue. Arginine 299, histidine 331, and serine 383 together coordinate substrate.

It belongs to the RuBisCO large chain family. Type I subfamily. In terms of assembly, heterohexadecamer of 8 large chains and 8 small chains. It depends on Mg(2+) as a cofactor.

The enzyme catalyses 2 (2R)-3-phosphoglycerate + 2 H(+) = D-ribulose 1,5-bisphosphate + CO2 + H2O. It catalyses the reaction D-ribulose 1,5-bisphosphate + O2 = 2-phosphoglycolate + (2R)-3-phosphoglycerate + 2 H(+). Its function is as follows. RuBisCO catalyzes two reactions: the carboxylation of D-ribulose 1,5-bisphosphate, the primary event in carbon dioxide fixation, as well as the oxidative fragmentation of the pentose substrate. Both reactions occur simultaneously and in competition at the same active site. The protein is Ribulose bisphosphate carboxylase large chain 1 of Nitrobacter hamburgensis (strain DSM 10229 / NCIMB 13809 / X14).